Consider the following 138-residue polypeptide: Large ribosomal subunit protein bL17 (138 aa).

The protein belongs to the bacterial ribosomal protein bL17 family. Part of the 50S ribosomal subunit. Contacts protein L32.

This Nitrobacter winogradskyi (strain ATCC 25391 / DSM 10237 / CIP 104748 / NCIMB 11846 / Nb-255) protein is Large ribosomal subunit protein bL17.